A 2267-amino-acid polypeptide reads, in one-letter code: Acetyl-CoA carboxylase 1 (2267 aa).

A Biotin carboxylation domain is found at 38-544 (PIHSVLVANN…HTGWLDSRIA (507 aa)). In terms of domain architecture, ATP-grasp spans 190–384 (PESCNSIPEE…AAQVVVGMGV (195 aa)). An ATP-binding site is contributed by 216-273 (CQVVGYPAMIKASWGGGGKGIRKVHNDDEVRALFKQVQGEVPGSPIFIMKVASQSRHL). Glu339, Glu353, and Asn355 together coordinate Mg(2+). The Mn(2+) site is built by Glu339, Glu353, and Asn355. Arg357 is an active-site residue. A Biotinyl-binding domain is found at 671-745 (LQKEHDPSKL…QAADLIARLD (75 aa)). Residue Lys712 is modified to N6-biotinyllysine. The CoA carboxyltransferase N-terminal domain maps to 1502-1843 (PYKPLDAIDL…YVGGPLPIMK (342 aa)). Positions 1502 to 2163 (PYKPLDAIDL…EDALAKEIRE (662 aa)) are carboxyltransferase. Residues Arg1752, Lys2053, and Arg2055 each contribute to the CoA site. One can recognise a CoA carboxyltransferase C-terminal domain in the interval 1847–2163 (PPDRPVTYFP…EDALAKEIRE (317 aa)).

In terms of assembly, homodimer. Mg(2+) serves as cofactor. It depends on Mn(2+) as a cofactor. The cofactor is biotin.

The protein resides in the cytoplasm. Its subcellular location is the cytosol. It carries out the reaction hydrogencarbonate + acetyl-CoA + ATP = malonyl-CoA + ADP + phosphate + H(+). The enzyme catalyses N(6)-biotinyl-L-lysyl-[protein] + hydrogencarbonate + ATP = N(6)-carboxybiotinyl-L-lysyl-[protein] + ADP + phosphate + H(+). Its pathway is lipid metabolism; malonyl-CoA biosynthesis; malonyl-CoA from acetyl-CoA: step 1/1. In terms of biological role, multifunctional enzyme that catalyzes the carboxylation of acetyl-CoA, forming malonyl-CoA, which is used in the plastid for fatty acid synthesis and in the cytosol in various biosynthetic pathways including fatty acid elongation. The protein is Acetyl-CoA carboxylase 1 (ACC1) of Oryza sativa subsp. japonica (Rice).